A 332-amino-acid chain; its full sequence is DNA-directed RNA polymerase subunit alpha (332 aa).

Positions 1–234 (MTVTISQVLR…DQLSVFGDFT (234 aa)) are alpha N-terminal domain (alpha-NTD). Residues 248 to 332 (VDPVLLRPID…PGVSQYGMLG (85 aa)) are alpha C-terminal domain (alpha-CTD).

The protein belongs to the RNA polymerase alpha chain family. As to quaternary structure, homodimer. The RNAP catalytic core consists of 2 alpha, 1 beta, 1 beta' and 1 omega subunit. When a sigma factor is associated with the core the holoenzyme is formed, which can initiate transcription.

It carries out the reaction RNA(n) + a ribonucleoside 5'-triphosphate = RNA(n+1) + diphosphate. Functionally, DNA-dependent RNA polymerase catalyzes the transcription of DNA into RNA using the four ribonucleoside triphosphates as substrates. This is DNA-directed RNA polymerase subunit alpha from Xylella fastidiosa (strain M12).